The sequence spans 293 residues: Elongation factor Ts (293 aa).

The interval 79 to 82 (TDFV) is involved in Mg(2+) ion dislocation from EF-Tu.

The protein belongs to the EF-Ts family.

The protein resides in the cytoplasm. Functionally, associates with the EF-Tu.GDP complex and induces the exchange of GDP to GTP. It remains bound to the aminoacyl-tRNA.EF-Tu.GTP complex up to the GTP hydrolysis stage on the ribosome. The polypeptide is Elongation factor Ts (Bacillus velezensis (strain DSM 23117 / BGSC 10A6 / LMG 26770 / FZB42) (Bacillus amyloliquefaciens subsp. plantarum)).